The chain runs to 335 residues: Autophagy-related protein 21 (335 aa).

WD repeat units follow at residues 165-205 (CHSS…LVTE) and 210-249 (YIPA…SDPN).

The protein belongs to the WD repeat PROPPIN family.

The protein resides in the cytoplasm. It is found in the golgi apparatus. The protein localises to the golgi stack membrane. Its subcellular location is the vacuole membrane. It localises to the preautophagosomal structure membrane. In terms of biological role, required for cytoplasm to vacuole transport (Cvt) vesicles formation and autophagy. Has a role in sporulation. The chain is Autophagy-related protein 21 (mug179) from Schizosaccharomyces pombe (strain 972 / ATCC 24843) (Fission yeast).